Consider the following 195-residue polypeptide: MSNIKLIVGLANPGAEYAQTRHNAGAWYVQELARICNVPLVAESKYFGVTARATLHGRDVRLLIPTTYMNLSGKSVAALANFFRILPEEILVAHDELDMDPGVAKFKLGGGHGGHNGLKDIIASLGNDKNFHRLRIGIGHPGDKNKVSGYVLGRAPAVEQERINAAIDEAVRSTEILFNQDMAKAMHRLHSFKAE.

Tyr17 serves as a coordination point for tRNA. His22 functions as the Proton acceptor in the catalytic mechanism. TRNA-binding residues include Tyr68, Asn70, and Asn116.

The protein belongs to the PTH family. In terms of assembly, monomer.

The protein localises to the cytoplasm. It catalyses the reaction an N-acyl-L-alpha-aminoacyl-tRNA + H2O = an N-acyl-L-amino acid + a tRNA + H(+). Functionally, hydrolyzes ribosome-free peptidyl-tRNAs (with 1 or more amino acids incorporated), which drop off the ribosome during protein synthesis, or as a result of ribosome stalling. In terms of biological role, catalyzes the release of premature peptidyl moieties from peptidyl-tRNA molecules trapped in stalled 50S ribosomal subunits, and thus maintains levels of free tRNAs and 50S ribosomes. The polypeptide is Peptidyl-tRNA hydrolase (Shewanella frigidimarina (strain NCIMB 400)).